A 187-amino-acid polypeptide reads, in one-letter code: uncharacterized protein (187 aa).

The interval 131-187 (VAEKKDQRKKKPKVKTQGENAPVAKSAGENSGKLEEQKDERKGIAKDIDDFFGGIDG) is disordered. Over residues 162-179 (GKLEEQKDERKGIAKDID) the composition is skewed to basic and acidic residues.

This is an uncharacterized protein from Haemophilus influenzae (Bacteriophage HP1).